The primary structure comprises 75 residues: ATP synthase subunit c (75 aa).

The next 2 helical transmembrane spans lie at 8 to 28 (FIAI…IANI) and 52 to 72 (IGAA…MLLI).

The protein belongs to the ATPase C chain family. F-type ATPases have 2 components, F(1) - the catalytic core - and F(0) - the membrane proton channel. F(1) has five subunits: alpha(3), beta(3), gamma(1), delta(1), epsilon(1). F(0) has three main subunits: a(1), b(2) and c(10-14). The alpha and beta chains form an alternating ring which encloses part of the gamma chain. F(1) is attached to F(0) by a central stalk formed by the gamma and epsilon chains, while a peripheral stalk is formed by the delta and b chains.

It localises to the cell membrane. Functionally, f(1)F(0) ATP synthase produces ATP from ADP in the presence of a proton or sodium gradient. F-type ATPases consist of two structural domains, F(1) containing the extramembraneous catalytic core and F(0) containing the membrane proton channel, linked together by a central stalk and a peripheral stalk. During catalysis, ATP synthesis in the catalytic domain of F(1) is coupled via a rotary mechanism of the central stalk subunits to proton translocation. In terms of biological role, key component of the F(0) channel; it plays a direct role in translocation across the membrane. A homomeric c-ring of between 10-14 subunits forms the central stalk rotor element with the F(1) delta and epsilon subunits. This Wolbachia pipientis wMel protein is ATP synthase subunit c.